A 115-amino-acid chain; its full sequence is NADH-ubiquinone oxidoreductase chain 3 (115 aa).

A run of 3 helical transmembrane segments spans residues 3–23 (LMLA…IMFW), 55–75 (FFLV…LLSL), and 84–104 (LPTM…SLAY).

The protein belongs to the complex I subunit 3 family. In terms of assembly, core subunit of respiratory chain NADH dehydrogenase (Complex I) which is composed of 45 different subunits. Interacts with TMEM186. Interacts with TMEM242.

Its subcellular location is the mitochondrion inner membrane. It catalyses the reaction a ubiquinone + NADH + 5 H(+)(in) = a ubiquinol + NAD(+) + 4 H(+)(out). Its function is as follows. Core subunit of the mitochondrial membrane respiratory chain NADH dehydrogenase (Complex I) which catalyzes electron transfer from NADH through the respiratory chain, using ubiquinone as an electron acceptor. Essential for the catalytic activity of complex I. The chain is NADH-ubiquinone oxidoreductase chain 3 from Papio hamadryas (Hamadryas baboon).